The following is a 95-amino-acid chain: Large ribosomal subunit protein bL21 (95 aa).

It belongs to the bacterial ribosomal protein bL21 family. As to quaternary structure, part of the 50S ribosomal subunit. Contacts protein L20.

In terms of biological role, this protein binds to 23S rRNA in the presence of protein L20. The sequence is that of Large ribosomal subunit protein bL21 from Chlorobaculum tepidum (strain ATCC 49652 / DSM 12025 / NBRC 103806 / TLS) (Chlorobium tepidum).